Here is a 107-residue protein sequence, read N- to C-terminus: Phosphoribosyl-ATP pyrophosphatase (107 aa).

This sequence belongs to the PRA-PH family.

The protein localises to the cytoplasm. It catalyses the reaction 1-(5-phospho-beta-D-ribosyl)-ATP + H2O = 1-(5-phospho-beta-D-ribosyl)-5'-AMP + diphosphate + H(+). Its pathway is amino-acid biosynthesis; L-histidine biosynthesis; L-histidine from 5-phospho-alpha-D-ribose 1-diphosphate: step 2/9. This chain is Phosphoribosyl-ATP pyrophosphatase, found in Bacillus thuringiensis (strain Al Hakam).